The primary structure comprises 476 residues: Ovarian-specific serine/threonine-protein kinase Lok (476 aa).

The FHA domain occupies 69–129; the sequence is FTAGRGEAND…NGTFVNNEKI (61 aa). The Protein kinase domain maps to 174–441; that stretch reads YYVNRKLGSG…IDDVLQSSWL (268 aa). ATP-binding positions include 180–188 and lysine 203; that span reads LGSGAYGLV. The active-site Proton acceptor is aspartate 303.

This sequence belongs to the protein kinase superfamily. CAMK Ser/Thr protein kinase family. CDS1 subfamily. As to expression, in stage 3 embryos, both isoforms are expressed in both somatic and pole cell nuclei. Expression in pole cell nuclei is sustained until stage 9 and weakly expressed after pole cell invagination into the abdominal cavity.

The protein localises to the nucleus speckle. The catalysed reaction is L-seryl-[protein] + ATP = O-phospho-L-seryl-[protein] + ADP + H(+). The enzyme catalyses L-threonyl-[protein] + ATP = O-phospho-L-threonyl-[protein] + ADP + H(+). Functionally, may have a role in germline establishment. This is Ovarian-specific serine/threonine-protein kinase Lok (lok) from Drosophila melanogaster (Fruit fly).